Here is a 373-residue protein sequence, read N- to C-terminus: Glutamine synthetase (373 aa).

Alanine 2 is subject to N-acetylalanine. The interval 2–25 (ATSASSHLNKGIKQVYMSLPQGEK) is required for glutamine-induced ubiquitination by CRL4(CRBN) and proteasomal degradation. Residues lysine 11 and lysine 14 each carry the N6-acetyllysine modification. One can recognise a GS beta-grasp domain in the interval 24 to 106 (EKVQAMYIWI…VFCEVFKYNR (83 aa)). Position 104 is a phosphotyrosine (tyrosine 104). The GS catalytic domain maps to 113–373 (LRHTCKRIMD…TGDEPFQYKN (261 aa)). ATP is bound at residue glutamate 134. 4 residues coordinate Mn(2+): glutamate 134, glutamate 136, glutamate 196, and glutamate 203. Residue 203–208 (EFQIGP) participates in ATP binding. Position 246 to 247 (246 to 247 (NW)) interacts with L-glutamate. Residue histidine 253 participates in Mn(2+) binding. ATP-binding positions include 255-257 (NFS), arginine 319, and arginine 324. An L-glutamate-binding site is contributed by arginine 319. 336-338 (YFE) serves as a coordination point for ADP. A Mn(2+)-binding site is contributed by glutamate 338. Arginine 340 lines the L-glutamate pocket. At serine 343 the chain carries Phosphoserine.

Belongs to the glutamine synthetase family. In terms of assembly, decamer; composed of two pentamers. Interacts with PALMD. Interacts with RHOJ. Interacts with BEST2; this interaction tethers a fraction of GLUL to the membrane, causing a decrease of cytosolic glutamine synthase (GS) activity and inhibits the chloride channel activity of BEST2 by affecting the gating at the aperture in the absence of intracellular glutamate. It depends on Mg(2+) as a cofactor. Requires Mn(2+) as cofactor. Post-translationally, palmitoylated; undergoes autopalmitoylation. In terms of processing, acetylated by EP300/p300; acetylation is stimulated by increased glutamine levels and promotes ubiquitin-mediated proteasomal degradation. Ubiquitinated by ZNRF1. Ubiquitinated by the DCX (DDB1-CUL4-X-box) E3 ubiquitin-protein ligase complex called CRL4(CRBN), leading to proteasomal degradation.

It localises to the cytoplasm. Its subcellular location is the cytosol. It is found in the microsome. The protein resides in the mitochondrion. The protein localises to the cell membrane. The catalysed reaction is L-glutamate + NH4(+) + ATP = L-glutamine + ADP + phosphate + H(+). It catalyses the reaction L-cysteinyl-[protein] + hexadecanoyl-CoA = S-hexadecanoyl-L-cysteinyl-[protein] + CoA. Glutamine synthetase activity is inhibited by methionine sulfoximine (MSO). In terms of biological role, glutamine synthetase that catalyzes the ATP-dependent conversion of glutamate and ammonia to glutamine. Its role depends on tissue localization: in the brain, it regulates the levels of toxic ammonia and converts neurotoxic glutamate to harmless glutamine, whereas in the liver, it is one of the enzymes responsible for the removal of ammonia. Plays a key role in ammonium detoxification during erythropoiesis: the glutamine synthetase activity is required to remove ammonium generated by porphobilinogen deaminase (HMBS) during heme biosynthesis to prevent ammonium accumulation and oxidative stress. Essential for proliferation of fetal skin fibroblasts. Independently of its glutamine synthetase activity, required for endothelial cell migration during vascular development. Involved in angiogenesis by regulating membrane localization and activation of the GTPase RHOJ, possibly by promoting RHOJ palmitoylation. May act as a palmitoyltransferase for RHOJ: able to autopalmitoylate and then transfer the palmitoyl group to RHOJ. Plays a role in ribosomal 40S subunit biogenesis. Through the interaction with BEST2, inhibits BEST2 channel activity by affecting the gating at the aperture in the absence of intracellular L-glutamate, but sensitizes BEST2 to intracellular L-glutamate, which promotes the opening of BEST2 and thus relieves its inhibitory effect on BEST2. In Sus scrofa (Pig), this protein is Glutamine synthetase.